The following is a 183-amino-acid chain: Ribosome-recycling factor (183 aa).

The protein belongs to the RRF family.

The protein resides in the cytoplasm. Its function is as follows. Responsible for the release of ribosomes from messenger RNA at the termination of protein biosynthesis. May increase the efficiency of translation by recycling ribosomes from one round of translation to another. The polypeptide is Ribosome-recycling factor (Ureaplasma urealyticum serovar 10 (strain ATCC 33699 / Western)).